Consider the following 341-residue polypeptide: L-threonine 3-dehydrogenase (341 aa).

Zn(2+) is bound at residue cysteine 38. Catalysis depends on charge relay system residues threonine 40 and histidine 43. Residues histidine 63, glutamate 64, cysteine 93, cysteine 96, cysteine 99, and cysteine 107 each contribute to the Zn(2+) site. NAD(+) contacts are provided by residues isoleucine 175, aspartate 195, arginine 200, leucine 262–isoleucine 264, and isoleucine 286–tyrosine 287.

This sequence belongs to the zinc-containing alcohol dehydrogenase family. As to quaternary structure, homotetramer. Requires Zn(2+) as cofactor.

The protein resides in the cytoplasm. The enzyme catalyses L-threonine + NAD(+) = (2S)-2-amino-3-oxobutanoate + NADH + H(+). Its pathway is amino-acid degradation; L-threonine degradation via oxydo-reductase pathway; glycine from L-threonine: step 1/2. Its function is as follows. Catalyzes the NAD(+)-dependent oxidation of L-threonine to 2-amino-3-ketobutyrate. The protein is L-threonine 3-dehydrogenase of Escherichia coli O17:K52:H18 (strain UMN026 / ExPEC).